The sequence spans 276 residues: Ribosomal RNA small subunit methyltransferase A (276 aa).

The S-adenosyl-L-methionine site is built by Asn-27, Leu-29, Gly-54, Glu-75, Asp-101, and Asn-123.

Belongs to the class I-like SAM-binding methyltransferase superfamily. rRNA adenine N(6)-methyltransferase family. RsmA subfamily.

The protein localises to the cytoplasm. The enzyme catalyses adenosine(1518)/adenosine(1519) in 16S rRNA + 4 S-adenosyl-L-methionine = N(6)-dimethyladenosine(1518)/N(6)-dimethyladenosine(1519) in 16S rRNA + 4 S-adenosyl-L-homocysteine + 4 H(+). Its function is as follows. Specifically dimethylates two adjacent adenosines (A1518 and A1519) in the loop of a conserved hairpin near the 3'-end of 16S rRNA in the 30S particle. May play a critical role in biogenesis of 30S subunits. This Bartonella quintana (strain Toulouse) (Rochalimaea quintana) protein is Ribosomal RNA small subunit methyltransferase A.